The primary structure comprises 130 residues: Small ribosomal subunit protein uS8 (130 aa).

This sequence belongs to the universal ribosomal protein uS8 family.

Its subcellular location is the cytoplasm. The chain is Small ribosomal subunit protein uS8 (RPS15A) from Daucus carota (Wild carrot).